Here is a 473-residue protein sequence, read N- to C-terminus: Serine palmitoyltransferase 1 (473 aa).

The segment at 1–66 (MATATEQWVL…KEELIEEWQP (66 aa)) is interaction with SPTLC2. The chain crosses the membrane as a helical span at residues 16 to 36 (ALYEAPAYHLILEGILILWII). The residue at position 164 (Y164) is a Phosphotyrosine; by ABL.

Belongs to the class-II pyridoxal-phosphate-dependent aminotransferase family. In terms of assembly, component of the serine palmitoyltransferase (SPT) complex, which is also composed of SPTLC2 or SPTLC3 and SPTSSA or SPTSSB. The heterodimer with SPTLC2 or SPTLC3 forms the catalytic core of the enzyme, while SPTSSA or SPTSSB subunits determine substrate specificity. SPT also interacts with ORMDL proteins, especially ORMDL3, which negatively regulate SPT activity in the presence of ceramides. Forms dimers of heterodimers with SPTLC2. Interacts with RTN4. The cofactor is pyridoxal 5'-phosphate. Post-translationally, phosphorylation at Tyr-164 inhibits activity and promotes cell survival.

The protein localises to the endoplasmic reticulum membrane. It catalyses the reaction L-serine + hexadecanoyl-CoA + H(+) = 3-oxosphinganine + CO2 + CoA. The enzyme catalyses octadecanoyl-CoA + L-serine + H(+) = 3-oxoeicosasphinganine + CO2 + CoA. The catalysed reaction is tetradecanoyl-CoA + L-serine + H(+) = 3-oxohexadecasphinganine + CO2 + CoA. It carries out the reaction dodecanoyl-CoA + L-serine + H(+) = 3-oxotetradecasphinganine + CO2 + CoA. Its pathway is lipid metabolism; sphingolipid metabolism. With respect to regulation, SPT complex catalytic activity is negatively regulated by ORMDL proteins, including ORMDL3, in the presence of ceramides. This mechanism allows to maintain ceramide levels at sufficient concentrations for the production of complex sphingolipids, but which prevents the accumulation of ceramides to levels that trigger apoptosis. In terms of biological role, component of the serine palmitoyltransferase multisubunit enzyme (SPT) that catalyzes the initial and rate-limiting step in sphingolipid biosynthesis by condensing L-serine and activated acyl-CoA (most commonly palmitoyl-CoA) to form long-chain bases. The SPT complex is also composed of SPTLC2 or SPTLC3 and SPTSSA or SPTSSB. Within this complex, the heterodimer with SPTLC2 or SPTLC3 forms the catalytic core. The composition of the serine palmitoyltransferase (SPT) complex determines the substrate preference. The SPTLC1-SPTLC2-SPTSSA complex shows a strong preference for C16-CoA substrate, while the SPTLC1-SPTLC3-SPTSSA isozyme uses both C14-CoA and C16-CoA as substrates, with a slight preference for C14-CoA. The SPTLC1-SPTLC2-SPTSSB complex shows a strong preference for C18-CoA substrate, while the SPTLC1-SPTLC3-SPTSSB isozyme displays an ability to use a broader range of acyl-CoAs, without apparent preference. Required for adipocyte cell viability and metabolic homeostasis. This is Serine palmitoyltransferase 1 (SPTLC1) from Pongo abelii (Sumatran orangutan).